A 1083-amino-acid chain; its full sequence is Ubiquitin-protein ligase E3C (1083 aa).

Composition is skewed to basic and acidic residues over residues Met1–Thr10 and Ser20–Glu40. The interval Met1 to Glu40 is disordered. The segment at Met1–Arg60 is cis-determinant of acceptor ubiquitin-binding. The IQ domain maps to Arg45 to Asp74. Positions Ala354–Val386 are disordered. Residues Ser366 to Asp376 show a composition bias toward acidic residues. Positions Asn744–Ser1083 constitute an HECT domain. Residue Lys903 forms a Glycyl lysine isopeptide (Lys-Gly) (interchain with G-Cter in ubiquitin); by autocatalysis linkage. The active-site Glycyl thioester intermediate is the Cys1051.

The protein belongs to the UBE3C family. Interacts with 26S proteasomes. Interacts (via the HECT domain) with UBE2D1 and, less efficiently, with UBE2L3. Autoubiquitinated; promoting its own degradation.

It catalyses the reaction S-ubiquitinyl-[E2 ubiquitin-conjugating enzyme]-L-cysteine + [acceptor protein]-L-lysine = [E2 ubiquitin-conjugating enzyme]-L-cysteine + N(6)-ubiquitinyl-[acceptor protein]-L-lysine.. It participates in protein modification; protein ubiquitination. Its function is as follows. E3 ubiquitin-protein ligase that specifically catalyzes 'Lys-29'- and 'Lys-48'-linked polyubiquitin chains. Accepts ubiquitin from the E2 ubiquitin-conjugating enzyme UBE2D1 in the form of a thioester and then directly transfers the ubiquitin to targeted substrates. Associates with the proteasome and promotes elongation of ubiquitin chains on substrates bound to the 26S proteasome. Also catalyzes 'Lys-29'- and 'Lys-48'-linked ubiquitination of 26S proteasome subunit ADRM1/RPN13 in response to proteotoxic stress, impairing the ability of the proteasome to bind and degrade ubiquitin-conjugated proteins. Acts as a negative regulator of autophagy by mediating 'Lys-29'- and 'Lys-48'-linked ubiquitination of PIK3C3/VPS34, promoting its degradation. Can assemble unanchored poly-ubiquitin chains in either 'Lys-29'- or 'Lys-48'-linked polyubiquitin chains; with some preference for 'Lys-48' linkages. Acts as a negative regulator of type I interferon by mediating 'Lys-48'-linked ubiquitination of IRF3 and IRF7, leading to their degradation by the proteasome. Catalyzes ubiquitination and degradation of CAND2. This chain is Ubiquitin-protein ligase E3C, found in Mus musculus (Mouse).